The primary structure comprises 250 residues: 5'/3'-nucleotidase SurE (250 aa).

Residues aspartate 8, aspartate 9, serine 39, and asparagine 92 each coordinate a divalent metal cation.

This sequence belongs to the SurE nucleotidase family. It depends on a divalent metal cation as a cofactor.

The protein resides in the cytoplasm. The catalysed reaction is a ribonucleoside 5'-phosphate + H2O = a ribonucleoside + phosphate. The enzyme catalyses a ribonucleoside 3'-phosphate + H2O = a ribonucleoside + phosphate. It catalyses the reaction [phosphate](n) + H2O = [phosphate](n-1) + phosphate + H(+). Functionally, nucleotidase with a broad substrate specificity as it can dephosphorylate various ribo- and deoxyribonucleoside 5'-monophosphates and ribonucleoside 3'-monophosphates with highest affinity to 3'-AMP. Also hydrolyzes polyphosphate (exopolyphosphatase activity) with the preference for short-chain-length substrates (P20-25). Might be involved in the regulation of dNTP and NTP pools, and in the turnover of 3'-mononucleotides produced by numerous intracellular RNases (T1, T2, and F) during the degradation of various RNAs. The sequence is that of 5'/3'-nucleotidase SurE from Wigglesworthia glossinidia brevipalpis.